A 538-amino-acid chain; its full sequence is Carboxypeptidase 2 (538 aa).

The N-terminal stretch at 1–21 (MVAYRFLTLISLGLGSHCASA) is a signal peptide. The N-linked (GlcNAc...) asparagine glycan is linked to N46. Residues 53–76 (PAFTSPGTVPRGFSDGTSGPTRDE) are disordered. In terms of domain architecture, Peptidase M14 spans 71–351 (GPTRDETMEG…VMVKSILQTA (281 aa)). Positions 136, 139, and 224 each coordinate Zn(2+). E322 acts as the Proton donor/acceptor in catalysis. N-linked (GlcNAc...) asparagine glycans are attached at residues N393 and N459.

It belongs to the peptidase M14 family. The cofactor is Zn(2+).

The protein localises to the secreted. Extracellular metalloprotease that contributes to pathogenicity. This is Carboxypeptidase 2 (MCPB) from Trichophyton tonsurans (Scalp ringworm fungus).